Here is a 205-residue protein sequence, read N- to C-terminus: Probable nicotinate-nucleotide adenylyltransferase (205 aa).

This sequence belongs to the NadD family.

It catalyses the reaction nicotinate beta-D-ribonucleotide + ATP + H(+) = deamido-NAD(+) + diphosphate. It participates in cofactor biosynthesis; NAD(+) biosynthesis; deamido-NAD(+) from nicotinate D-ribonucleotide: step 1/1. Functionally, catalyzes the reversible adenylation of nicotinate mononucleotide (NaMN) to nicotinic acid adenine dinucleotide (NaAD). This chain is Probable nicotinate-nucleotide adenylyltransferase, found in Arthrobacter sp. (strain FB24).